Consider the following 49-residue polypeptide: Large ribosomal subunit protein eL40 (49 aa).

This sequence belongs to the eukaryotic ribosomal protein eL40 family.

The polypeptide is Large ribosomal subunit protein eL40 (Natronomonas pharaonis (strain ATCC 35678 / DSM 2160 / CIP 103997 / JCM 8858 / NBRC 14720 / NCIMB 2260 / Gabara) (Halobacterium pharaonis)).